The chain runs to 2193 residues: Genome polyprotein (2193 aa).

Residues 1–22 (MGSQVSTQRSGSHENSNSATEG) form a disordered region. The N-myristoyl glycine; by host moiety is linked to residue Gly-2. Residues 2–1503 (GSQVSTQRSG…HLNRAVLVMQ (1502 aa)) lie on the Cytoplasmic side of the membrane. 2 amphipathic alpha-helix regions span residues 566 to 588 (GDRVADVIESSIGDSVSRALTQA) and 568 to 588 (RVADVIESSIGDSVSRALTQA). Active-site for protease 2A activity residues include His-883 and Asp-901. Positions 918 and 920 each coordinate Zn(2+). The active-site For protease 2A activity is the Cys-972. The Zn(2+) site is built by Cys-978 and His-980. A membrane-binding region spans residues 1112–1184 (SASWLKKFND…EQSAASQEDL (73 aa)). The interval 1112–1250 (SASWLKKFND…SPGTGKSLAT (139 aa)) is oligomerization. The segment at 1133–1137 (SNKIS) is RNA-binding. The region spanning 1216–1374 (EKRMNNYMQF…YKTDLGRLDA (159 aa)) is the SF3 helicase domain. 1240-1247 (GSPGTGKS) provides a ligand contact to ATP. Zn(2+) is bound by residues Cys-1381, Cys-1392, Ser-1393, and Cys-1397. The C4-type; degenerate zinc finger occupies 1381–1397 (CSENNTANFKRCSPLVC). The RNA-binding stretch occupies residues 1424–1431 (EYSNRSAI). Residues 1435 to 1440 (IEALFQ) form an oligomerization region. The stretch at 1504–1519 (SIATVVAVVSLVYVIY) is an intramembrane region. At 1520–2193 (KLFAGFQGAY…NLRRNWLELF (674 aa)) the chain is on the cytoplasmic side. Tyr-1529 carries the O-(5'-phospho-RNA)-tyrosine modification. The region spanning 1549-1727 (GPSLDFALSL…FCAGLKRSYF (179 aa)) is the Peptidase C3 domain. Catalysis depends on for protease 3C activity residues His-1588, Glu-1619, and Cys-1695. The region spanning 1958–2073 (GSLFAFDYSG…ASYPFPIDCL (116 aa)) is the RdRp catalytic domain. Mg(2+)-binding residues include Asp-1964 and Asp-2060.

Belongs to the picornaviruses polyprotein family. Interacts with capsid protein VP1 and capsid protein VP3 to form heterotrimeric protomers. In terms of assembly, interacts with capsid protein VP0, and capsid protein VP3 to form heterotrimeric protomers. Five protomers subsequently associate to form pentamers which serve as building blocks for the capsid. Interacts with capsid protein VP2, capsid protein VP3 and capsid protein VP4 following cleavage of capsid protein VP0. Interacts with host SCARB2. Interacts with host ARF6; this interaction mediates viral endocytosis. As to quaternary structure, interacts with capsid protein VP1 and capsid protein VP3 in the mature capsid. Interacts with host SCARB2. Interacts with capsid protein VP0 and capsid protein VP1 to form heterotrimeric protomers. Five protomers subsequently associate to form pentamers which serve as building blocks for the capsid. Interacts with capsid protein VP4 in the mature capsid. Interacts with protein 2C; this interaction may be important for virion morphogenesis. In terms of assembly, interacts with capsid protein VP1 and capsid protein VP3. As to quaternary structure, homodimer. Interacts with host BAX; this interaction activates the mitochondrial apoptotic pathway. Interacts with host ILF2. In terms of assembly, homohexamer; forms a hexameric ring structure with 6-fold symmetry characteristic of AAA+ ATPases. Interacts (via N-terminus) with host RTN3 (via reticulon domain); this interaction is important for viral replication. Interacts with capsid protein VP3; this interaction may be important for virion morphogenesis. As to quaternary structure, interacts with protein 3CD. Homodimer. Interacts with host GBF1. Interacts (via GOLD domain) with host ACBD3 (via GOLD domain); this interaction allows the formation of a viral protein 3A/ACBD3 heterotetramer with a 2:2 stoichiometry, which will stimulate the recruitment of host PI4KB in order to synthesize PI4P at the viral RNA replication sites. In terms of assembly, interacts with RNA-directed RNA polymerase. As to quaternary structure, interacts with host IFIH1/MDA5; this interaction inhibits host IFIH1. Interacts with host RIGI. Interacts with protein 3AB and with RNA-directed RNA polymerase. In terms of assembly, interacts with Viral protein genome-linked and with protein 3CD. Requires Mg(2+) as cofactor. Specific enzymatic cleavages in vivo by the viral proteases yield processing intermediates and the mature proteins. Post-translationally, myristoylation is required for the formation of pentamers during virus assembly. Further assembly of 12 pentamers and a molecule of genomic RNA generates the provirion. In terms of processing, during virion maturation, immature virions are rendered infectious following cleavage of VP0 into VP4 and VP2. This maturation seems to be an autocatalytic event triggered by the presence of RNA in the capsid and it is followed by a conformational change infectious virion. Myristoylation is required during RNA encapsidation and formation of the mature virus particle. Post-translationally, VPg is uridylylated by the polymerase into VPg-pUpU. This acts as a nucleotide-peptide primer for the genomic RNA replication.

It localises to the virion. The protein localises to the host cytoplasm. The protein resides in the host cytoplasmic vesicle membrane. Its subcellular location is the host nucleus. It catalyses the reaction a ribonucleoside 5'-triphosphate + H2O = a ribonucleoside 5'-diphosphate + phosphate + H(+). The enzyme catalyses Selective cleavage of Tyr-|-Gly bond in the picornavirus polyprotein.. The catalysed reaction is RNA(n) + a ribonucleoside 5'-triphosphate = RNA(n+1) + diphosphate. It carries out the reaction Selective cleavage of Gln-|-Gly bond in the poliovirus polyprotein. In other picornavirus reactions Glu may be substituted for Gln, and Ser or Thr for Gly.. Its activity is regulated as follows. Replication or transcription is subject to high level of random mutations by the nucleotide analog ribavirin. Its function is as follows. Forms an icosahedral capsid of pseudo T=3 symmetry with capsid proteins VP2 and VP3. The capsid is 300 Angstroms in diameter, composed of 60 copies of each capsid protein and enclosing the viral positive strand RNA genome. Capsid protein VP1 mainly forms the vertices of the capsid. Capsid protein VP1, together with VP2, interacts with host cell receptor SCARB2 to provide virion attachment to target host cells. This attachment induces virion internalization. This attachment induces virion internalization. After binding to its receptor, the capsid undergoes conformational changes. Capsid protein VP1 N-terminus (that contains an amphipathic alpha-helix) and capsid protein VP4 are externalized. Together, they shape a pore in the host membrane through which viral genome is translocated to host cell cytoplasm. Functionally, forms an icosahedral capsid of pseudo T=3 symmetry with capsid proteins VP2 and VP3. The capsid is 300 Angstroms in diameter, composed of 60 copies of each capsid protein and enclosing the viral positive strand RNA genome. Capsid protein VP2, together with VP1, interacts with host cell receptor SCARB2 to provide virion attachment to target host cells. In terms of biological role, forms an icosahedral capsid of pseudo T=3 symmetry with capsid proteins VP2 and VP3. The capsid is 300 Angstroms in diameter, composed of 60 copies of each capsid protein and enclosing the viral positive strand RNA genome. Lies on the inner surface of the capsid shell. After binding to the host receptor, the capsid undergoes conformational changes. Capsid protein VP4 is released, Capsid protein VP1 N-terminus is externalized, and together, they shape a pore in the host membrane through which the viral genome is translocated into the host cell cytoplasm. Its function is as follows. Component of immature procapsids, which is cleaved into capsid proteins VP4 and VP2 after maturation. Allows the capsid to remain inactive before the maturation step. Functionally, cysteine protease that cleaves viral polyprotein and specific host proteins. It is responsible for the autocatalytic cleavage between the P1 and P2 regions, which is the first cleavage occurring in the polyprotein. Also cleaves the host translation initiation factor EIF4G1, in order to shut down the capped cellular mRNA translation. Inhibits the host nucleus-cytoplasm protein and RNA trafficking by cleaving host members of the nuclear pores. Counteracts stress granule formation probably by antagonizing its assembly or promoting its dissassembly. Cleaves and inhibits host IFIH1/MDA5, thereby inhibiting the type-I IFN production and the establishment of the antiviral state. Cleaves and inhibits host MAVS, thereby inhibiting the type-I IFN production and the establishment of the antiviral state. In terms of biological role, plays an essential role in the virus replication cycle by acting as a viroporin. Creates a pore in the host endoplasmic reticulum and as a consequence releases Ca2+ in the cytoplasm of infected cell. In turn, high levels of cytoplasmic calcium may trigger membrane trafficking and transport of viral ER-associated proteins to viroplasms, sites of viral genome replication. Also activates the mitochondrial apoptotic pathway by activating host BAX. Induces and associates with structural rearrangements of intracellular membranes. Displays RNA-binding, nucleotide binding and NTPase activities. May play a role in virion morphogenesis and viral RNA encapsidation by interacting with the capsid protein VP3. Its function is as follows. Localizes the viral replication complex to the surface of membranous vesicles. Together with protein 3CD binds the Cis-Active RNA Element (CRE) which is involved in RNA synthesis initiation. Acts as a cofactor to stimulate the activity of 3D polymerase, maybe through a nucleid acid chaperone activity. Functionally, localizes the viral replication complex to the surface of membranous vesicles. It inhibits host cell endoplasmic reticulum-to-Golgi apparatus transport and causes the disassembly of the Golgi complex, possibly through GBF1 interaction. This would result in depletion of MHC, trail receptors and IFN receptors at the host cell surface. Plays an essential role in viral RNA replication by recruiting ACBD3 and PI4KB at the viral replication sites, thereby allowing the formation of the rearranged membranous structures where viral replication takes place. In terms of biological role, acts as a primer for viral RNA replication and remains covalently bound to viral genomic RNA. VPg is uridylylated prior to priming replication into VPg-pUpU. The oriI viral genomic sequence may act as a template for this. The VPg-pUpU is then used as primer on the genomic RNA poly(A) by the RNA-dependent RNA polymerase to replicate the viral genome. During genome replication, the VPg-RNA linkage is removed by the host TDP2, thereby accelerating replication. During the late stage of the replication cycle, host TDP2 is excluded from sites of viral RNA synthesis and encapsidation, allowing for the generation of progeny virions. Involved in the viral replication complex and viral polypeptide maturation. It exhibits protease activity with a specificity and catalytic efficiency that is different from protease 3C. Protein 3CD lacks polymerase activity. Protein 3CD binds to the 5'UTR of the viral genome. Its function is as follows. Major viral protease that mediates proteolytic processing of the polyprotein. Cleaves host EIF5B, contributing to host translation shutoff. Also cleaves host PABPC1, contributing to host translation shutoff. Disassembles host cytoplasmic stress granules by cleaving host G3BP1, although this effect is less prononced than the inhibition induced by protease 2A. Cleaves host RIGI and thus contributes to the inhibition of type I interferon production. Cleaves host IRF7 and thus contributes to the inhibition of type I interferon production. Cleaves host HNRNPA1 thereby increasing the translation of apoptosis protease activating factor APAF1, leading to apoptosis of the host cell. Cleaves host NLRP1, triggers host N-glycine-mediated degradation of the autoinhibitory NLRP1 N-terminal fragment. Functionally, replicates the viral genomic RNA on the surface of intracellular membranes. May form linear arrays of subunits that propagate along a strong head-to-tail interaction called interface-I. Covalently attaches UMP to a tyrosine of VPg, which is used to prime RNA synthesis. The positive stranded RNA genome is first replicated at virus induced membranous vesicles, creating a dsRNA genomic replication form. This dsRNA is then used as template to synthesize positive stranded RNA genomes. ss(+)RNA genomes are either translated, replicated or encapsidated. The protein is Genome polyprotein of Homo sapiens (Human).